The primary structure comprises 68 residues: Figainin 1 (68 aa).

Positions 1–22 (MAFLKKSLFLVLFLGLVSLSIG) are cleaved as a signal peptide. A disordered region spans residues 23–45 (EEEKREEEEKNEEGANQEENAEN). A propeptide spanning residues 23-47 (EEEKREEEEKNEEGANQEENAENKE) is cleaved from the precursor. Over residues 26–42 (KREEEEKNEEGANQEEN) the composition is skewed to acidic residues. Lys67 carries the post-translational modification Lysine amide.

In terms of tissue distribution, expressed by the skin glands.

It localises to the secreted. Functionally, antimicrobial peptide that displays antibacterial and antiprotozoal activity. Exhibits antibacterial activity against the Gram-positive bacteria S.epidermidis ATCC 12228 (MIC=2 uM), E.casseliflavus ATCC 700327 (MIC=16 uM), S.aureus ATCC 25923 (MIC=4 uM) and E.faecalis ATCC 29212 (MIC=8 uM), and the Gram-negative bacteria E.coli ATCC 25922 (MIC=16 uM) and K.pneumoniae ATCC 13883 (MIC=4 uM). Displays antiprotozoal activity against the epimastigote form of T.cruzi (IC(50)=15.9 uM). Does not show antimicrobial activity against the Gram-negative bacterium P.aeruginosa ATCC 27853, or the fungi C.albicans ATCC 90028 and C.parapsilosis ATCC 22019. Shows high cytolytic activity against human erythrocytes (HC(50)=10 uM), and displays anti-proliferative effects against various cancer cell lines including MCF-7 breast cancer cells (IC(50)=13.7 uM), HeLa cervical adenocarcinoma cells (IC(50)=11.1 uM) and B16F10 murine melanoma cells (IC(50)=10.5 uM). The sequence is that of Figainin 1 from Boana raniceps (Chaco tree frog).